The sequence spans 212 residues: Pyridoxine/pyridoxamine 5'-phosphate oxidase (212 aa).

Substrate contacts are provided by residues 8-11 (RRTY) and Lys66. FMN-binding positions include 61-66 (RIVLLK), 76-77 (FT), Arg82, Lys83, and Gln105. Residues Tyr123, Arg127, and Ser131 each contribute to the substrate site. FMN contacts are provided by residues 140–141 (QS) and Trp184. 190–192 (RLH) contacts substrate. Arg194 is an FMN binding site.

It belongs to the pyridoxamine 5'-phosphate oxidase family. Homodimer. The cofactor is FMN.

It catalyses the reaction pyridoxamine 5'-phosphate + O2 + H2O = pyridoxal 5'-phosphate + H2O2 + NH4(+). It carries out the reaction pyridoxine 5'-phosphate + O2 = pyridoxal 5'-phosphate + H2O2. The protein operates within cofactor metabolism; pyridoxal 5'-phosphate salvage; pyridoxal 5'-phosphate from pyridoxamine 5'-phosphate: step 1/1. It functions in the pathway cofactor metabolism; pyridoxal 5'-phosphate salvage; pyridoxal 5'-phosphate from pyridoxine 5'-phosphate: step 1/1. Catalyzes the oxidation of either pyridoxine 5'-phosphate (PNP) or pyridoxamine 5'-phosphate (PMP) into pyridoxal 5'-phosphate (PLP). The protein is Pyridoxine/pyridoxamine 5'-phosphate oxidase of Cupriavidus taiwanensis (strain DSM 17343 / BCRC 17206 / CCUG 44338 / CIP 107171 / LMG 19424 / R1) (Ralstonia taiwanensis (strain LMG 19424)).